The chain runs to 153 residues: Large ribosomal subunit protein uL30 (153 aa).

This sequence belongs to the universal ribosomal protein uL30 family. In terms of assembly, part of the 50S ribosomal subunit.

In Methanospirillum hungatei JF-1 (strain ATCC 27890 / DSM 864 / NBRC 100397 / JF-1), this protein is Large ribosomal subunit protein uL30.